The following is a 755-amino-acid chain: Exocyst complex component 3 (755 aa).

2 coiled-coil regions span residues 34–62 (DQLD…AAIQ) and 618–649 (RAVM…QLRF). At Lys-38 the chain carries N6-acetyllysine.

It belongs to the SEC6 family. As to quaternary structure, the exocyst complex is composed of EXOC1, EXOC2, EXOC3, EXOC4, EXOC5, EXOC6, EXOC7 and EXOC8. Interacts with EXOC3L1. Interacts with BIRC6/bruce. Interacts with MYRIP. Interacts with SLC6A9. Widely expressed, with highest levels in kidney, followed by brain (at protein level).

It localises to the cytoplasm. It is found in the perinuclear region. The protein resides in the cell projection. The protein localises to the growth cone. Its subcellular location is the neuron projection. It localises to the midbody. It is found in the golgi apparatus. In terms of biological role, component of the exocyst complex involved in the docking of exocytic vesicles with fusion sites on the plasma membrane. The chain is Exocyst complex component 3 (Exoc3) from Rattus norvegicus (Rat).